We begin with the raw amino-acid sequence, 115 residues long: Large ribosomal subunit protein bL19 (115 aa).

It belongs to the bacterial ribosomal protein bL19 family.

This protein is located at the 30S-50S ribosomal subunit interface and may play a role in the structure and function of the aminoacyl-tRNA binding site. The sequence is that of Large ribosomal subunit protein bL19 from Thermosipho melanesiensis (strain DSM 12029 / CIP 104789 / BI429).